A 310-amino-acid chain; its full sequence is Methionyl-tRNA formyltransferase (310 aa).

Position 111 to 114 (111 to 114 (SLLP)) interacts with (6S)-5,6,7,8-tetrahydrofolate.

This sequence belongs to the Fmt family.

It catalyses the reaction L-methionyl-tRNA(fMet) + (6R)-10-formyltetrahydrofolate = N-formyl-L-methionyl-tRNA(fMet) + (6S)-5,6,7,8-tetrahydrofolate + H(+). Its function is as follows. Attaches a formyl group to the free amino group of methionyl-tRNA(fMet). The formyl group appears to play a dual role in the initiator identity of N-formylmethionyl-tRNA by promoting its recognition by IF2 and preventing the misappropriation of this tRNA by the elongation apparatus. The polypeptide is Methionyl-tRNA formyltransferase (Rhodopseudomonas palustris (strain BisB18)).